The following is a 315-amino-acid chain: Biotin synthase (315 aa).

A Radical SAM core domain is found at N39–R266. [4Fe-4S] cluster is bound by residues C54, C58, and C61. [2Fe-2S] cluster-binding residues include C98, C129, C189, and R261.

It belongs to the radical SAM superfamily. Biotin synthase family. As to quaternary structure, homodimer. Requires [4Fe-4S] cluster as cofactor. [2Fe-2S] cluster serves as cofactor.

The catalysed reaction is (4R,5S)-dethiobiotin + (sulfur carrier)-SH + 2 reduced [2Fe-2S]-[ferredoxin] + 2 S-adenosyl-L-methionine = (sulfur carrier)-H + biotin + 2 5'-deoxyadenosine + 2 L-methionine + 2 oxidized [2Fe-2S]-[ferredoxin]. Its pathway is cofactor biosynthesis; biotin biosynthesis; biotin from 7,8-diaminononanoate: step 2/2. In terms of biological role, catalyzes the conversion of dethiobiotin (DTB) to biotin by the insertion of a sulfur atom into dethiobiotin via a radical-based mechanism. The sequence is that of Biotin synthase from Legionella pneumophila (strain Paris).